Reading from the N-terminus, the 657-residue chain is Matrix metalloproteinase-15 (657 aa).

The first 36 residues, 1-36, serve as a signal peptide directing secretion; sequence MGSDRSALGRPGCTGSCLSSRASLLPLLLVLLDCLG. A propeptide spanning residues 37–127 is cleaved from the precursor; sequence HGTASKDAEV…KANLRRRRKR (91 aa). A Cysteine switch motif is present at residues 105-112; it reads PRCGVPDQ. Cysteine 107 provides a ligand contact to Zn(2+). At 128 to 614 the chain is on the extracellular side; sequence YTLTGKAWNN…MEEVVRTVNV (487 aa). An N-linked (GlcNAc...) asparagine glycan is attached at asparagine 146. Residue histidine 255 participates in Zn(2+) binding. The active site involves glutamate 256. Histidine 259 and histidine 265 together coordinate Zn(2+). The interval 295 to 365 is disordered; sequence IQQLYGSPDG…ERPDQYGPNI (71 aa). The span at 328–337 shows a compositional bias: pro residues; sequence PRPPQPPHPG. 4 Hemopexin repeats span residues 363–411, 412–457, 459–507, and 508–555; these read PNIC…WRGL, PGNI…GTDI, YDRI…QGIP, and TSPK…FMGC. An intrachain disulfide couples cysteine 366 to cysteine 555. N-linked (GlcNAc...) asparagine glycosylation is present at asparagine 414. A disordered region spans residues 561–599; sequence PRSRWPDVARPPFNPNGGAEPEADGDSKEENAGDKDEGS. Residues 585–599 are compositionally biased toward basic and acidic residues; sequence GDSKEENAGDKDEGS. The helical transmembrane segment at 615–635 threads the bilayer; sequence VMVLVPLLLLLCILGLAFALV. The Cytoplasmic segment spans residues 636–657; it reads QMQRKGAPRMLLYCKRSLQEWV.

It belongs to the peptidase M10A family. Requires Zn(2+) as cofactor. Ca(2+) is required as a cofactor. Post-translationally, the precursor is cleaved by a furin endopeptidase.

The protein localises to the membrane. Its function is as follows. Endopeptidase that degrades various components of the extracellular matrix. May activate progelatinase A. The protein is Matrix metalloproteinase-15 (Mmp15) of Mus musculus (Mouse).